Here is a 181-residue protein sequence, read N- to C-terminus: HGPRTase-like protein 2 (181 aa).

It belongs to the purine/pyrimidine phosphoribosyltransferase family. Archaeal HPRT subfamily.

Its function is as follows. May catalyze a purine salvage reaction, the substrate is unknown. The polypeptide is HGPRTase-like protein 2 (Haloquadratum walsbyi (strain DSM 16854 / JCM 12705 / C23)).